Reading from the N-terminus, the 336-residue chain is Glycerol-3-phosphate dehydrogenase [NAD(P)+] (336 aa).

Residues S16, Y17, H37, and K111 each contribute to the NADPH site. Sn-glycerol 3-phosphate contacts are provided by K111, G140, and T142. Position 144 (A144) interacts with NADPH. K196, D249, S259, R260, and N261 together coordinate sn-glycerol 3-phosphate. The active-site Proton acceptor is the K196. Position 260 (R260) interacts with NADPH. NADPH-binding residues include V284 and E286.

Belongs to the NAD-dependent glycerol-3-phosphate dehydrogenase family.

The protein resides in the cytoplasm. The enzyme catalyses sn-glycerol 3-phosphate + NAD(+) = dihydroxyacetone phosphate + NADH + H(+). It catalyses the reaction sn-glycerol 3-phosphate + NADP(+) = dihydroxyacetone phosphate + NADPH + H(+). Its pathway is membrane lipid metabolism; glycerophospholipid metabolism. In terms of biological role, catalyzes the reduction of the glycolytic intermediate dihydroxyacetone phosphate (DHAP) to sn-glycerol 3-phosphate (G3P), the key precursor for phospholipid synthesis. This is Glycerol-3-phosphate dehydrogenase [NAD(P)+] from Actinobacillus pleuropneumoniae serotype 5b (strain L20).